A 193-amino-acid chain; its full sequence is Cbp/p300-interacting transactivator 1 (193 aa).

Disordered regions lie at residues 1 to 26, 50 to 88, and 106 to 147; these read MPTT…NQEM, VASN…LHPA, and GMAA…SPAI. Low complexity predominate over residues 54–73; sequence GTKASGAPTSSSGSPIGSPT. A Nuclear export signal motif is present at residues 158-167; that stretch reads LMSLVVELGL.

It belongs to the CITED family. In terms of assembly, interacts (via C-terminus) with CREBBP. Interacts with EGR2. Homodimer. Binds to RBM14. Interacts (via N-terminus) with HSPA8; the interaction suppresses the association of CITED1 with p300/CBP and SMAD-mediated transcription transactivation. Interacts (via C-terminus) with TOX3 (via HGM box); the interaction increases estrogen-response element (ERE)-dependent transcription and protection against cell death. Interacts with ESR1; the interaction occurs in a estrogen-dependent manner. Interacts (unphosphorylated form preferentially and via C-terminus) with EP300. Phosphorylated. Phosphorylation changes in a cell cycle-dependent manner and reduces its transcriptional coactivator activity. As to expression, expressed only in melanocytes and testis.

It localises to the nucleus. Its subcellular location is the cytoplasm. Functionally, transcriptional coactivator of the p300/CBP-mediated transcription complex. Enhances SMAD-mediated transcription by strengthening the functional link between the DNA-binding SMAD transcription factors and the p300/CBP transcription coactivator complex. Stimulates estrogen-dependent transactivation activity mediated by estrogen receptors signaling; stabilizes the interaction of estrogen receptor ESR1 and histone acetyltransferase EP300. Positively regulates TGF-beta signaling through its association with the SMAD/p300/CBP-mediated transcriptional coactivator complex. Induces transcription from estrogen-responsive promoters and protection against cell death. Potentiates EGR2-mediated transcriptional activation activity from the ERBB2 promoter. Acts as an inhibitor of osteoblastic mineralization through a cAMP-dependent parathyroid hormone receptor signaling. May play a role in pigmentation of melanocytes. Associates with chromatin to the estrogen-responsive TGF-alpha promoter region in a estrogen-dependent manner. The chain is Cbp/p300-interacting transactivator 1 (CITED1) from Homo sapiens (Human).